The primary structure comprises 384 residues: MSWQEKINAALDARRAADALRRRYPVAQGAGRWLVADDRQYLNFSSNDYLGLSHHPQIIRAWKQGAEQFGIGSGGSGHVSGYSVVHQALEEELAEWLGYSRALLFISGFAANQAVIAAMMAKEDRIVADRLSHASLLEAASLSPSQLRRFTHNDVAHLARLLASPCPGQQLVVTEGVFSMDGDSAPLAEIQQVTQQHNGWLMVDDAHGTGVIGEQGRGSCWLQKVKPELLVVTFGKGFGVSGAAVLCSSTVADYLLQFARHLIYSTSMPPAQAQALRASLAVIRRDEGDARREKLVSLIARFRAGVQDLPFTLADSCSAIQPLIVGDNSRALQLAEKLRQQGCWVTAIRPPTVPAGTARLRLTLTAAHEMQDIDRLLEVLHGNG.

Position 21 (R21) interacts with substrate. Residue 108–109 participates in pyridoxal 5'-phosphate binding; it reads GF. Residue H133 coordinates substrate. The pyridoxal 5'-phosphate site is built by S179, H207, and T233. An N6-(pyridoxal phosphate)lysine modification is found at K236. T352 lines the substrate pocket.

The protein belongs to the class-II pyridoxal-phosphate-dependent aminotransferase family. BioF subfamily. Homodimer. It depends on pyridoxal 5'-phosphate as a cofactor.

It carries out the reaction 6-carboxyhexanoyl-[ACP] + L-alanine + H(+) = (8S)-8-amino-7-oxononanoate + holo-[ACP] + CO2. It functions in the pathway cofactor biosynthesis; biotin biosynthesis. Its function is as follows. Catalyzes the decarboxylative condensation of pimeloyl-[acyl-carrier protein] and L-alanine to produce 8-amino-7-oxononanoate (AON), [acyl-carrier protein], and carbon dioxide. In Shigella flexneri serotype 5b (strain 8401), this protein is 8-amino-7-oxononanoate synthase.